Here is a 124-residue protein sequence, read N- to C-terminus: Small ribosomal subunit protein uS12cy (124 aa).

This sequence belongs to the universal ribosomal protein uS12 family. In terms of assembly, part of the 30S ribosomal subunit.

Its subcellular location is the plastid. The protein localises to the chloroplast. In terms of biological role, with S4 and S5 plays an important role in translational accuracy. Located at the interface of the 30S and 50S subunits. This is Small ribosomal subunit protein uS12cy (rps12-B) from Olimarabidopsis pumila (Dwarf rocket).